The following is a 415-amino-acid chain: Dibenzothiophene monooxygenase (415 aa).

FMN-binding positions include Tyr94, 127–132, 157–161, Arg280, 365–366, and Thr387; these read NASSEN, KHFSS, and IG. A lid loop region spans residues 129-140; it reads SSENNSHILDWK.

Belongs to the DszC flavin monooxygenase family. In terms of assembly, homotetramer.

The protein resides in the cytoplasm. The catalysed reaction is dibenzothiophene + 2 FMNH2 + 2 O2 = dibenzothiophene 5,5-dioxide + 2 FMN + 2 H2O + 2 H(+). It carries out the reaction dibenzothiophene + FMNH2 + O2 = dibenzothiophene 5-oxide + FMN + H2O + H(+). It catalyses the reaction dibenzothiophene 5-oxide + FMNH2 + O2 = dibenzothiophene 5,5-dioxide + FMN + H2O + H(+). The protein operates within sulfur metabolism; dibenzothiophene degradation. Inhibited at high concentrations of FMN or FAD. In terms of biological role, catalyzes the first step of the '4S' desulfurization pathway that removes covalently bound sulfur from dibenzothiophene (DBT) without breaking carbon-carbon bonds. Sulfur dioxygenase which converts DBT to DBT-sulfone (DBTO2 or DBT 5,5-dioxide) probably in a stepwise manner. In addition to FMNH2 can also use FAD (although FAD is less efficient). This chain is Dibenzothiophene monooxygenase, found in Mycolicibacterium goodii (Mycobacterium goodii).